The following is a 616-amino-acid chain: Xaa-Pro aminopeptidase app-1 (616 aa).

A peptide is bound by residues arginine 78 and histidine 392. Aspartate 413, aspartate 424, and histidine 487 together coordinate Zn(2+). Residues histidine 487, histidine 496, and glutamate 522 each contribute to the a peptide site. Glutamate 522 and glutamate 536 together coordinate Zn(2+).

Belongs to the peptidase M24B family. As to quaternary structure, homodimer. May interact with pid-2, pid-4 and pid-5. It depends on Zn(2+) as a cofactor. As to expression, specifically expressed in the intestine.

The protein localises to the cytoplasm. It carries out the reaction Release of any N-terminal amino acid, including proline, that is linked to proline, even from a dipeptide or tripeptide.. Strongly inhibited by the metal ion chelators EDTA and 1,10-phenanthroline. Also inhibited by apstatin. Activity towards bradykinin is inhibited by Mn(2+) and Zn(2+) at all concentrations tested, whereas Co(2+) is inhibitory at concentrations above 100 uM and activatory at 10 uM. Its function is as follows. Catalyzes the removal of a penultimate prolyl residue from the N-termini of peptides, such as Arg-Pro-Pro. Has activity towards the flp-9 neuropeptide KPSFVRF-amide. This chain is Xaa-Pro aminopeptidase app-1, found in Caenorhabditis elegans.